The primary structure comprises 453 residues: Bifunctional protein GlmU (453 aa).

Residues 1–225 (MNIVILAAGT…EWETLGVNSK (225 aa)) are pyrophosphorylase. Residues 6 to 9 (LAAG), lysine 20, glutamine 71, 76 to 77 (GT), 98 to 100 (YGD), glycine 135, glutamate 150, asparagine 165, and asparagine 223 each bind UDP-N-acetyl-alpha-D-glucosamine. Aspartate 100 lines the Mg(2+) pocket. Position 223 (asparagine 223) interacts with Mg(2+). A linker region spans residues 226–246 (AQLAELERIHQRNLADALLAA). Residues 247–453 (GVTLADPARI…GYVRPVKKKS (207 aa)) are N-acetyltransferase. Residues arginine 329 and lysine 347 each contribute to the UDP-N-acetyl-alpha-D-glucosamine site. Histidine 359 (proton acceptor) is an active-site residue. Tyrosine 362 and asparagine 373 together coordinate UDP-N-acetyl-alpha-D-glucosamine. Residues alanine 376, 382–383 (NY), serine 401, and alanine 419 contribute to the acetyl-CoA site.

It in the N-terminal section; belongs to the N-acetylglucosamine-1-phosphate uridyltransferase family. This sequence in the C-terminal section; belongs to the transferase hexapeptide repeat family. As to quaternary structure, homotrimer. Requires Mg(2+) as cofactor.

The protein resides in the cytoplasm. It carries out the reaction alpha-D-glucosamine 1-phosphate + acetyl-CoA = N-acetyl-alpha-D-glucosamine 1-phosphate + CoA + H(+). The enzyme catalyses N-acetyl-alpha-D-glucosamine 1-phosphate + UTP + H(+) = UDP-N-acetyl-alpha-D-glucosamine + diphosphate. It participates in nucleotide-sugar biosynthesis; UDP-N-acetyl-alpha-D-glucosamine biosynthesis; N-acetyl-alpha-D-glucosamine 1-phosphate from alpha-D-glucosamine 6-phosphate (route II): step 2/2. The protein operates within nucleotide-sugar biosynthesis; UDP-N-acetyl-alpha-D-glucosamine biosynthesis; UDP-N-acetyl-alpha-D-glucosamine from N-acetyl-alpha-D-glucosamine 1-phosphate: step 1/1. It functions in the pathway bacterial outer membrane biogenesis; LPS lipid A biosynthesis. In terms of biological role, catalyzes the last two sequential reactions in the de novo biosynthetic pathway for UDP-N-acetylglucosamine (UDP-GlcNAc). The C-terminal domain catalyzes the transfer of acetyl group from acetyl coenzyme A to glucosamine-1-phosphate (GlcN-1-P) to produce N-acetylglucosamine-1-phosphate (GlcNAc-1-P), which is converted into UDP-GlcNAc by the transfer of uridine 5-monophosphate (from uridine 5-triphosphate), a reaction catalyzed by the N-terminal domain. The polypeptide is Bifunctional protein GlmU (Burkholderia mallei (strain NCTC 10247)).